The sequence spans 145 residues: D-aminoacyl-tRNA deacylase (145 aa).

Residues 137-138 (GP) carry the Gly-cisPro motif, important for rejection of L-amino acids motif.

The protein belongs to the DTD family. In terms of assembly, homodimer.

It localises to the cytoplasm. The enzyme catalyses glycyl-tRNA(Ala) + H2O = tRNA(Ala) + glycine + H(+). It catalyses the reaction a D-aminoacyl-tRNA + H2O = a tRNA + a D-alpha-amino acid + H(+). Its function is as follows. An aminoacyl-tRNA editing enzyme that deacylates mischarged D-aminoacyl-tRNAs. Also deacylates mischarged glycyl-tRNA(Ala), protecting cells against glycine mischarging by AlaRS. Acts via tRNA-based rather than protein-based catalysis; rejects L-amino acids rather than detecting D-amino acids in the active site. By recycling D-aminoacyl-tRNA to D-amino acids and free tRNA molecules, this enzyme counteracts the toxicity associated with the formation of D-aminoacyl-tRNA entities in vivo and helps enforce protein L-homochirality. In Salmonella paratyphi A (strain AKU_12601), this protein is D-aminoacyl-tRNA deacylase.